The primary structure comprises 122 residues: Large ribosomal subunit protein uL14 (122 aa).

Belongs to the universal ribosomal protein uL14 family. Part of the 50S ribosomal subunit. Forms a cluster with proteins L3 and L19. In the 70S ribosome, L14 and L19 interact and together make contacts with the 16S rRNA in bridges B5 and B8.

Functionally, binds to 23S rRNA. Forms part of two intersubunit bridges in the 70S ribosome. The polypeptide is Large ribosomal subunit protein uL14 (Chlorobaculum tepidum (strain ATCC 49652 / DSM 12025 / NBRC 103806 / TLS) (Chlorobium tepidum)).